A 428-amino-acid polypeptide reads, in one-letter code: Proline--tRNA ligase (428 aa).

The protein belongs to the class-II aminoacyl-tRNA synthetase family. ProS type 2 subfamily. In terms of assembly, homodimer.

It is found in the cytoplasm. The enzyme catalyses tRNA(Pro) + L-proline + ATP = L-prolyl-tRNA(Pro) + AMP + diphosphate. Catalyzes the attachment of proline to tRNA(Pro) in a two-step reaction: proline is first activated by ATP to form Pro-AMP and then transferred to the acceptor end of tRNA(Pro). This chain is Proline--tRNA ligase, found in Rickettsia typhi (strain ATCC VR-144 / Wilmington).